Consider the following 328-residue polypeptide: Probable transcription factor At4g00610 (328 aa).

Residues 31-143 form a disordered region; the sequence is AKNKTLVTPS…ERAKTETETG (113 aa). Positions 35 to 54 are enriched in polar residues; the sequence is TLVTPSTVKKSSDVASTSKK. Over residues 84–108 the composition is skewed to acidic residues; it reads SEEEEEDEPSSDSESGSESESDTEA. The segment covering 122-143 has biased composition (basic and acidic residues); sequence NEKRQSEGKPEEERAKTETETG.

This sequence belongs to the GeBP family.

The protein is Probable transcription factor At4g00610 of Arabidopsis thaliana (Mouse-ear cress).